The primary structure comprises 304 residues: Cytochrome c biogenesis protein CcsA (304 aa).

8 helical membrane passes run 11–31, 37–57, 63–83, 96–116, 141–161, 212–232, 246–263, and 275–295; these read SLGFAGFVLLLLAMPLAFWAV, AGLVRLLVAVANLLFTAQLIL, GHFPISNLYESLCFLAWACTL, IVAAAATPMGLGCIAFASFAL, VIMVSYAALLVGSLLSLAVLV, TITVGFLMLTVGIVSGAVWAN, TWALICWLVYAAYLHTRL, and VAVVGLVVIAVCYIGVNLLGI.

The protein belongs to the CcmF/CycK/Ccl1/NrfE/CcsA family. In terms of assembly, may interact with ccs1.

The protein resides in the cellular thylakoid membrane. Required during biogenesis of c-type cytochromes (cytochrome c6 and cytochrome f) at the step of heme attachment. The polypeptide is Cytochrome c biogenesis protein CcsA (Synechococcus sp. (strain CC9605)).